The primary structure comprises 683 residues: Multidrug resistance protein MdtO (683 aa).

9 helical membrane passes run 43–63 (VILI…AVLF), 75–95 (FVAI…FLIY), 100–120 (GEPL…MFLM), 125–145 (LGLV…FPAM), 158–178 (WCIV…VLWF), 402–422 (FGGA…VMPW), 426–446 (IVEL…IATS), 457–477 (MVVT…YDLV), and 483–503 (ALGI…VWPE).

This sequence belongs to the MdtO family. Could be part of a tripartite efflux system composed of MdtN, MdtO and MdtP.

It is found in the cell inner membrane. Its function is as follows. Could be involved in resistance to puromycin, acriflavine and tetraphenylarsonium chloride. The chain is Multidrug resistance protein MdtO (mdtO) from Escherichia coli (strain K12).